The sequence spans 103 residues: Large ribosomal subunit protein uL24 (103 aa).

Belongs to the universal ribosomal protein uL24 family. In terms of assembly, part of the 50S ribosomal subunit.

In terms of biological role, one of two assembly initiator proteins, it binds directly to the 5'-end of the 23S rRNA, where it nucleates assembly of the 50S subunit. Functionally, one of the proteins that surrounds the polypeptide exit tunnel on the outside of the subunit. In Mannheimia succiniciproducens (strain KCTC 0769BP / MBEL55E), this protein is Large ribosomal subunit protein uL24.